The primary structure comprises 503 residues: MTEIRFSTDKESFIETARAAADGTRVPVEARVTVADPFEAYRRARDENTDGFYLETTGGQSGWGYFGIEPIERVEVSAGATPAQDGGSPSLEAIDDLLDREHLERGDCTVPYPCGAFGWLSYDVARELEDIPETTVSDGLPRLQFGVFDCIAAWEEPHDGNVEIHVTACPTVDGSPESAFERGRTMARELAQDAIHGEKHVQSQPTAASQATFESECGEAAFADRVRQIKQYVRDGDTFQTNVSHRLTAPAAVHPVDTFDAVRRVNPAPYSALLEFPGVDLVSASPELLLDVDGDQLLTEPIAGTRPRGATPSEDEDLEVDLCSDEKERAEHAMLVDLERNDLGKVSEYGSVDVAEYRRVDRYSEVMHLVSLIEGELRDAVSIADAVAAVFPGGTITGAPKPRTMEIIDEVERTRRGPYTGSIGMFGFDDRATLNITIRTLVHYDDEYRLRVGSGIVHDSVPEAEYRETLDKARALVTAVDEALGEQGSFAVESETEPMEGMR.

Position 269–271 (269–271 (PYS)) interacts with L-tryptophan. 304–305 (GT) serves as a coordination point for chorismate. Glutamate 331 is a Mg(2+) binding site. Chorismate is bound by residues tyrosine 419, arginine 439, 453-455 (GSG), and glycine 455. Position 468 (glutamate 468) interacts with Mg(2+).

This sequence belongs to the anthranilate synthase component I family. Tetramer of two components I and two components II. Mg(2+) serves as cofactor.

The enzyme catalyses chorismate + L-glutamine = anthranilate + pyruvate + L-glutamate + H(+). Its pathway is amino-acid biosynthesis; L-tryptophan biosynthesis; L-tryptophan from chorismate: step 1/5. This is Anthranilate synthase component 1 3 (trpE3) from Haloarcula marismortui (strain ATCC 43049 / DSM 3752 / JCM 8966 / VKM B-1809) (Halobacterium marismortui).